The following is a 117-amino-acid chain: Class I hydrophobin 2 (117 aa).

A signal peptide spans 1-21 (EIVSLSLSLLAVVPLVVLVIA). 4 disulfide bridges follow: Cys-35/Cys-96, Cys-42/Cys-90, Cys-43/Cys-76, and Cys-97/Cys-110.

This sequence belongs to the fungal hydrophobin family. As to quaternary structure, self-assembles to form functional amyloid fibrils called rodlets. Self-assembly into fibrillar rodlets occurs spontaneously at hydrophobic:hydrophilic interfaces and the rodlets further associate laterally to form amphipathic monolayers.

It is found in the secreted. The protein localises to the cell wall. Functionally, aerial growth, conidiation, and dispersal of filamentous fungi in the environment rely upon a capability of their secreting small amphipathic proteins called hydrophobins (HPBs) with low sequence identity. Class I can self-assemble into an outermost layer of rodlet bundles on aerial cell surfaces, conferring cellular hydrophobicity that supports fungal growth, development and dispersal; whereas Class II form highly ordered films at water-air interfaces through intermolecular interactions but contribute nothing to the rodlet structure. This Pisolithus tinctorius (Dead man's foot) protein is Class I hydrophobin 2.